The sequence spans 453 residues: MNIVILAAGTGKRMRSALPKVLHPLAGQPLLAHVIDTARTLKPTHLVVVVGHGAEAVRKAVAAPDVQFAVQEQQLGTGHAVQQALPLLDPSAPTLVLYGDVPLTRAGTLQALTERAGQGGYGVLTVTLADPSGYGRIVRDAQGKVARIVEQKDATPEQLEIAEINTGIIVAPTERLGRWLAALKNDNAQGEFYLTDAVEMAIEAGLEVVTTQPEDEWETLGVNSKQQLAELERIHQHNVADALLVAGVTLADPARLDVRGTLECGRDVSIDVNCVFEGRVTLADNVTIGPNCVIRDANIGAGTRVDAFTHIEGAEVGANAVLGPYARLRPGASLHDESHVGNFVEVKNAVLGRGSKANHLTYIGDSDIGARVNIGAGTITCNYDGANKFRTIIEDDVFVGSDTQLVAPVRVKRGATIAAGTTVWKDVEADALVLNDKTQTSKTGYVRPTKKKS.

The tract at residues 1–225 is pyrophosphorylase; sequence MNIVILAAGT…EWETLGVNSK (225 aa). UDP-N-acetyl-alpha-D-glucosamine is bound by residues 6–9, lysine 20, glutamine 71, 76–77, 98–100, glycine 135, glutamate 150, asparagine 165, and asparagine 223; these read LAAG, GT, and YGD. Aspartate 100 serves as a coordination point for Mg(2+). Asparagine 223 provides a ligand contact to Mg(2+). A linker region spans residues 226-246; that stretch reads QQLAELERIHQHNVADALLVA. An N-acetyltransferase region spans residues 247–453; sequence GVTLADPARL…GYVRPTKKKS (207 aa). Positions 329 and 347 each coordinate UDP-N-acetyl-alpha-D-glucosamine. Histidine 359 acts as the Proton acceptor in catalysis. Residues tyrosine 362 and asparagine 373 each contribute to the UDP-N-acetyl-alpha-D-glucosamine site. Acetyl-CoA contacts are provided by residues alanine 376, 382–383, serine 401, and alanine 419; that span reads NY.

It in the N-terminal section; belongs to the N-acetylglucosamine-1-phosphate uridyltransferase family. This sequence in the C-terminal section; belongs to the transferase hexapeptide repeat family. As to quaternary structure, homotrimer. Requires Mg(2+) as cofactor.

The protein localises to the cytoplasm. It catalyses the reaction alpha-D-glucosamine 1-phosphate + acetyl-CoA = N-acetyl-alpha-D-glucosamine 1-phosphate + CoA + H(+). It carries out the reaction N-acetyl-alpha-D-glucosamine 1-phosphate + UTP + H(+) = UDP-N-acetyl-alpha-D-glucosamine + diphosphate. Its pathway is nucleotide-sugar biosynthesis; UDP-N-acetyl-alpha-D-glucosamine biosynthesis; N-acetyl-alpha-D-glucosamine 1-phosphate from alpha-D-glucosamine 6-phosphate (route II): step 2/2. It participates in nucleotide-sugar biosynthesis; UDP-N-acetyl-alpha-D-glucosamine biosynthesis; UDP-N-acetyl-alpha-D-glucosamine from N-acetyl-alpha-D-glucosamine 1-phosphate: step 1/1. The protein operates within bacterial outer membrane biogenesis; LPS lipid A biosynthesis. In terms of biological role, catalyzes the last two sequential reactions in the de novo biosynthetic pathway for UDP-N-acetylglucosamine (UDP-GlcNAc). The C-terminal domain catalyzes the transfer of acetyl group from acetyl coenzyme A to glucosamine-1-phosphate (GlcN-1-P) to produce N-acetylglucosamine-1-phosphate (GlcNAc-1-P), which is converted into UDP-GlcNAc by the transfer of uridine 5-monophosphate (from uridine 5-triphosphate), a reaction catalyzed by the N-terminal domain. In Paraburkholderia phytofirmans (strain DSM 17436 / LMG 22146 / PsJN) (Burkholderia phytofirmans), this protein is Bifunctional protein GlmU.